A 284-amino-acid polypeptide reads, in one-letter code: Bifunctional protein FolD (284 aa).

NADP(+)-binding positions include 166-168 (GAS) and isoleucine 232.

It belongs to the tetrahydrofolate dehydrogenase/cyclohydrolase family. In terms of assembly, homodimer.

The enzyme catalyses (6R)-5,10-methylene-5,6,7,8-tetrahydrofolate + NADP(+) = (6R)-5,10-methenyltetrahydrofolate + NADPH. It carries out the reaction (6R)-5,10-methenyltetrahydrofolate + H2O = (6R)-10-formyltetrahydrofolate + H(+). Its pathway is one-carbon metabolism; tetrahydrofolate interconversion. In terms of biological role, catalyzes the oxidation of 5,10-methylenetetrahydrofolate to 5,10-methenyltetrahydrofolate and then the hydrolysis of 5,10-methenyltetrahydrofolate to 10-formyltetrahydrofolate. This Shewanella pealeana (strain ATCC 700345 / ANG-SQ1) protein is Bifunctional protein FolD.